We begin with the raw amino-acid sequence, 215 residues long: Vesicle-trafficking protein SEC22b (215 aa).

Over 1 to 194 (MVLLTMIARV…KYLNMRSTYA (194 aa)) the chain is Cytoplasmic. In terms of domain architecture, Longin spans 6 to 119 (MIARVADGLP…YSFIEFDTFI (114 aa)). The residue at position 38 (K38) is an N6-acetyllysine. Residues 134–194 (NLGSINTELQ…KYLNMRSTYA (61 aa)) enclose the v-SNARE coiled-coil homology domain. Residue S137 is modified to Phosphoserine. T140 is modified (phosphothreonine). Phosphoserine occurs at positions 164, 168, 174, and 177. A helical; Anchor for type IV membrane protein transmembrane segment spans residues 195-215 (KLAAVAVFFIMLIVYVRFWWL).

Belongs to the synaptobrevin family. Interacts with STX17. Component of two distinct SNARE complexes consisting of STX5, GOSR2/BOS1, BET1 and SEC22B or STX18, USE1L, BNIP1/SEC20L and SEC22B. YKT6 can probably replace SEC22B as subunit of either complex. Interacts with the COPII Sec23/24 complex composed of SEC23A and SEC24A; recruits SEC22B into COPII-coated vesicles to allow its transport from the endoplasmic reticulum to the Golgi. Interacts with BET1.

The protein resides in the endoplasmic reticulum membrane. It localises to the endoplasmic reticulum-Golgi intermediate compartment membrane. Its subcellular location is the golgi apparatus. It is found in the cis-Golgi network membrane. The protein localises to the trans-Golgi network membrane. The protein resides in the melanosome. Functionally, SNARE involved in targeting and fusion of ER-derived transport vesicles with the Golgi complex as well as Golgi-derived retrograde transport vesicles with the ER. This Cricetulus griseus (Chinese hamster) protein is Vesicle-trafficking protein SEC22b (Sec22b).